A 425-amino-acid polypeptide reads, in one-letter code: Protein let-756 (425 aa).

Disordered stretches follow at residues Leu277–Glu298 and Glu314–Pro425. Basic residues predominate over residues Lys281–Arg291. A compositionally biased stretch (polar residues) spans Ala329–Asn340. The segment covering His378–Arg389 has biased composition (basic residues). Residues Asp395–Pro425 show a composition bias toward polar residues.

Belongs to the heparin-binding growth factors family. Interacts with pal-1. Expressed in pharynx, CAN neuron and body wall muscles.

It is found in the nucleus. It localises to the membrane. Its function is as follows. Required for larval development. Probably by binding receptor egl-15, negatively regulates membrane protrusion from body wall muscles during larval development. The chain is Protein let-756 (let-756) from Caenorhabditis elegans.